Consider the following 76-residue polypeptide: UPF0291 protein BPUM_1689 (76 aa).

Disordered stretches follow at residues 1 to 31 (MISKNQLARINELSKKSKETGLSDAEKTEQK) and 56 to 76 (DPEGNDVTPEKLKRERDQNLH). Basic and acidic residues-rich tracts occupy residues 12-31 (ELSKKSKETGLSDAEKTEQK) and 63-76 (TPEKLKRERDQNLH).

It belongs to the UPF0291 family.

The protein resides in the cytoplasm. The sequence is that of UPF0291 protein BPUM_1689 from Bacillus pumilus (strain SAFR-032).